The chain runs to 1009 residues: Anillin-like protein 2 (1009 aa).

Disordered regions lie at residues 1–29 (MYRRENINFSHPPQLKSPPPMSSPLDSNR), 272–295 (FGQEESVRASPMSRRNRRGTQTIV), and 539–558 (GTGYSASSSGPQFTRSPTLV). Over residues 542-557 (YSASSSGPQFTRSPTL) the composition is skewed to polar residues. Positions 626-657 (SAADKINDSKRQISKLIETIEKTRKHIQLAEI) form a coiled coil. The 114-residue stretch at 892-1005 (DVEYRGFLYL…WLNAINDTLF (114 aa)) folds into the PH domain.

Localizes to the surface of the rachis.

Functionally, required to maintain the structure of the rachis, the central cytoplasmic core of the syncytial adult gonad. Failure to maintain the rachis leads to premature dissociation of oocytes and thereby impedes oogenesis. The chain is Anillin-like protein 2 (ani-2) from Caenorhabditis elegans.